We begin with the raw amino-acid sequence, 101 residues long: uncharacterized protein (101 aa).

This is an uncharacterized protein from Escherichia coli O157:H7.